Here is a 185-residue protein sequence, read N- to C-terminus: ATP synthase subunit delta (185 aa).

The protein belongs to the ATPase delta chain family. F-type ATPases have 2 components, F(1) - the catalytic core - and F(0) - the membrane proton channel. F(1) has five subunits: alpha(3), beta(3), gamma(1), delta(1), epsilon(1). CF(0) has four main subunits: a(1), b(1), b'(1) and c(10-14). The alpha and beta chains form an alternating ring which encloses part of the gamma chain. F(1) is attached to F(0) by a central stalk formed by the gamma and epsilon chains, while a peripheral stalk is formed by the delta, b and b' chains.

It localises to the cell inner membrane. Its function is as follows. F(1)F(0) ATP synthase produces ATP from ADP in the presence of a proton or sodium gradient. F-type ATPases consist of two structural domains, F(1) containing the extramembraneous catalytic core and F(0) containing the membrane proton channel, linked together by a central stalk and a peripheral stalk. During catalysis, ATP synthesis in the catalytic domain of F(1) is coupled via a rotary mechanism of the central stalk subunits to proton translocation. Functionally, this protein is part of the stalk that links CF(0) to CF(1). It either transmits conformational changes from CF(0) to CF(1) or is implicated in proton conduction. The sequence is that of ATP synthase subunit delta from Gloeobacter violaceus (strain ATCC 29082 / PCC 7421).